Reading from the N-terminus, the 133-residue chain is Nickel-responsive regulator (133 aa).

Ni(2+) is bound by residues His-76, His-87, His-89, and Cys-95.

The protein belongs to the transcriptional regulatory CopG/NikR family. As to quaternary structure, homotetramer. It depends on Ni(2+) as a cofactor.

Its function is as follows. Transcriptional repressor of the nikABCDE operon. Is active in the presence of excessive concentrations of intracellular nickel. The protein is Nickel-responsive regulator of Salmonella arizonae (strain ATCC BAA-731 / CDC346-86 / RSK2980).